A 271-amino-acid chain; its full sequence is Phospholipid scramblase family member 5 (271 aa).

Over residues 1–10 (MASKDAQNQR) the composition is skewed to polar residues. Residues 1-33 (MASKDAQNQRRGLPGFLPGAPDPDQSLPASSNP) form a disordered region. The interval 1-45 (MASKDAQNQRRGLPGFLPGAPDPDQSLPASSNPGNQAWQLSLPLP) is proline-rich domain (PRD).

The protein belongs to the phospholipid scramblase family.

This is Phospholipid scramblase family member 5 (PLSCR5) from Homo sapiens (Human).